The sequence spans 642 residues: Arginine--tRNA ligase, chloroplastic/mitochondrial (642 aa).

The transit peptide at Met1–Met53 directs the protein to the chloroplast and mitochondrion. N-acetylalanine is present on Ala54. Residues Pro190–Leu201 carry the 'HIGH' region motif.

The protein belongs to the class-I aminoacyl-tRNA synthetase family.

The protein resides in the plastid. It localises to the chloroplast. The protein localises to the mitochondrion. The enzyme catalyses tRNA(Arg) + L-arginine + ATP = L-arginyl-tRNA(Arg) + AMP + diphosphate. Forms part of a macromolecular complex that catalyzes the attachment of specific amino acids to cognate tRNAs during protein synthesis. This Arabidopsis thaliana (Mouse-ear cress) protein is Arginine--tRNA ligase, chloroplastic/mitochondrial.